We begin with the raw amino-acid sequence, 328 residues long: Tryptophan--tRNA ligase (328 aa).

ATP contacts are provided by residues 11–13 (QPT) and 19–20 (GN). The 'HIGH' region signature appears at 12 to 20 (PTGNIHLGN). Residue Asp135 coordinates L-tryptophan. Residues 147-149 (GED), Ile186, and 195-199 (KMSKS) contribute to the ATP site. The 'KMSKS' region signature appears at 195 to 199 (KMSKS).

This sequence belongs to the class-I aminoacyl-tRNA synthetase family. Homodimer.

Its subcellular location is the cytoplasm. It catalyses the reaction tRNA(Trp) + L-tryptophan + ATP = L-tryptophyl-tRNA(Trp) + AMP + diphosphate + H(+). Its function is as follows. Catalyzes the attachment of tryptophan to tRNA(Trp). The polypeptide is Tryptophan--tRNA ligase (Wolinella succinogenes (strain ATCC 29543 / DSM 1740 / CCUG 13145 / JCM 31913 / LMG 7466 / NCTC 11488 / FDC 602W) (Vibrio succinogenes)).